A 661-amino-acid polypeptide reads, in one-letter code: Ubiquitin carboxyl-terminal hydrolase 51 (661 aa).

The segment at 1–144 (MRGTQGAQEM…SENSLLEVGS (144 aa)) is disordered. Residues 21-30 (TSENLTSRGS) show a composition bias toward polar residues. Positions 53 to 71 (PRRKPRPRPQPRSRSRGGR) are enriched in basic residues. Residues 75-96 (APPPPPAKPPPPPPAPPPPPLP) are compositionally biased toward pro residues. The UBP-type zinc-finger motif lies at 149-267 (TGCCHVESFK…KETKEKILGL (119 aa)). Cys151, His153, Cys192, Cys195, Cys205, Cys208, Cys213, His218, His222, His228, Cys241, and Cys244 together coordinate Zn(2+). The region spanning 320–656 (RGLINLGNTC…EGYLLFYHRQ (337 aa)) is the USP domain. The Nucleophile role is filled by Cys329. His615 functions as the Proton acceptor in the catalytic mechanism.

It belongs to the peptidase C19 family. In terms of assembly, interacts with H2A.

The protein localises to the chromosome. It catalyses the reaction Thiol-dependent hydrolysis of ester, thioester, amide, peptide and isopeptide bonds formed by the C-terminal Gly of ubiquitin (a 76-residue protein attached to proteins as an intracellular targeting signal).. Specifically deubiquitinates 'Lys-14' (H2AK13Ub) and 'Lys-16'(H2AK15Ub) of histone H2A regulating the DNA damage response at double-strand breaks (DSBs). USP51 is recruited to chromatin after DNA damage and regulates the dynamic assembly/disassembly of TP53BP1 and BRCA1. Functions in DNA double-strand break repair also by mediating the deubiquitination and subsequent stabilization of DGCR8, leading to the recruitment of DGCR8 binding partners to double strand breaks such as RNF168 or MDC1. In addition, promotes the deubiquitination and stabilization of the transcriptional repressor ZEB1. This Mus musculus (Mouse) protein is Ubiquitin carboxyl-terminal hydrolase 51.